Reading from the N-terminus, the 152-residue chain is Putative rho GDP-dissociation inhibitor 2 (152 aa).

Belongs to the Rho GDI family.

It is found in the cytoplasm. Its function is as follows. Regulates the GDP/GTP exchange reaction of the Rho proteins by inhibiting the dissociation of GDP from them, and the subsequent binding of GTP to them. In Dictyostelium discoideum (Social amoeba), this protein is Putative rho GDP-dissociation inhibitor 2 (rdiB).